Consider the following 97-residue polypeptide: Small ribosomal subunit protein bS20 (97 aa).

This sequence belongs to the bacterial ribosomal protein bS20 family.

In terms of biological role, binds directly to 16S ribosomal RNA. This Methylibium petroleiphilum (strain ATCC BAA-1232 / LMG 22953 / PM1) protein is Small ribosomal subunit protein bS20.